Here is a 967-residue protein sequence, read N- to C-terminus: Leucine--tRNA ligase (967 aa).

The 'HIGH' region signature appears at 43-53; it reads PYLSGHLHVGH. The 'KMSKS' region motif lies at 650 to 654; sequence KMSKS. Residue Lys653 participates in ATP binding.

Belongs to the class-I aminoacyl-tRNA synthetase family.

It is found in the cytoplasm. The enzyme catalyses tRNA(Leu) + L-leucine + ATP = L-leucyl-tRNA(Leu) + AMP + diphosphate. This chain is Leucine--tRNA ligase, found in Thermococcus kodakarensis (strain ATCC BAA-918 / JCM 12380 / KOD1) (Pyrococcus kodakaraensis (strain KOD1)).